The following is a 281-amino-acid chain: 3-deoxy-manno-octulosonate cytidylyltransferase (281 aa).

The protein belongs to the KdsB family.

Its subcellular location is the cytoplasm. The catalysed reaction is 3-deoxy-alpha-D-manno-oct-2-ulosonate + CTP = CMP-3-deoxy-beta-D-manno-octulosonate + diphosphate. It functions in the pathway nucleotide-sugar biosynthesis; CMP-3-deoxy-D-manno-octulosonate biosynthesis; CMP-3-deoxy-D-manno-octulosonate from 3-deoxy-D-manno-octulosonate and CTP: step 1/1. Its pathway is bacterial outer membrane biogenesis; lipopolysaccharide biosynthesis. Activates KDO (a required 8-carbon sugar) for incorporation into bacterial lipopolysaccharide in Gram-negative bacteria. The sequence is that of 3-deoxy-manno-octulosonate cytidylyltransferase from Xanthomonas campestris pv. campestris (strain B100).